The sequence spans 616 residues: Glycoprotein Q1 (616 aa).

The signal sequence occupies residues 1 to 24 (MRPPRRSAPILVCAISMATALSNA). 5 N-linked (GlcNAc...) asparagine; by host glycosylation sites follow: Asn23, Asn44, Asn282, Asn330, and Asn351.

Interacts with isoform gQ2. The heterodimer gQ1-gQ2 associates with the glycoprotein complex gH-gL to form a tetrameric complex. The gH/gL/gQ1/gQ2 complex binds to host TNFRSF4. Post-translationally, glycosylated by host.

Its subcellular location is the virion. It is found in the host endoplasmic reticulum lumen. Functionally, plays a role in virus entry by participating in host receptor binding at the cell surface. This Homo sapiens (Human) protein is Glycoprotein Q1.